Reading from the N-terminus, the 651-residue chain is Acetyl-coenzyme A synthetase (651 aa).

CoA-binding positions include 189-192 (RGGK), Thr-311, and Asn-335. ATP is bound by residues 387-389 (GEP), 411-416 (DTWWQT), Asp-500, and Arg-515. Position 523 (Ser-523) interacts with CoA. Arg-526 contributes to the ATP binding site. The Mg(2+) site is built by Val-537, His-539, and Val-542. Arg-586 is a binding site for CoA. Residue Lys-611 is modified to N6-acetyllysine.

This sequence belongs to the ATP-dependent AMP-binding enzyme family. Mg(2+) serves as cofactor. In terms of processing, acetylated. Deacetylation by the SIR2-homolog deacetylase activates the enzyme.

The enzyme catalyses acetate + ATP + CoA = acetyl-CoA + AMP + diphosphate. Its function is as follows. Catalyzes the conversion of acetate into acetyl-CoA (AcCoA), an essential intermediate at the junction of anabolic and catabolic pathways. AcsA undergoes a two-step reaction. In the first half reaction, AcsA combines acetate with ATP to form acetyl-adenylate (AcAMP) intermediate. In the second half reaction, it can then transfer the acetyl group from AcAMP to the sulfhydryl group of CoA, forming the product AcCoA. The sequence is that of Acetyl-coenzyme A synthetase from Brucella anthropi (strain ATCC 49188 / DSM 6882 / CCUG 24695 / JCM 21032 / LMG 3331 / NBRC 15819 / NCTC 12168 / Alc 37) (Ochrobactrum anthropi).